The sequence spans 369 residues: Outer membrane protein P2 (369 aa).

The signal sequence occupies residues 1–20 (MKKTLAALIVGAFAASAANA).

Belongs to the Gram-negative porin family. Homotrimer.

It localises to the cell outer membrane. In terms of biological role, forms pores that allow passive diffusion of small molecules across the outer membrane. In Haemophilus influenzae, this protein is Outer membrane protein P2 (ompP2).